We begin with the raw amino-acid sequence, 225 residues long: Ribosomal RNA large subunit methyltransferase E (225 aa).

S-adenosyl-L-methionine contacts are provided by Gly-76, Trp-78, Asp-99, Asp-115, and Asp-139. Lys-179 serves as the catalytic Proton acceptor.

Belongs to the class I-like SAM-binding methyltransferase superfamily. RNA methyltransferase RlmE family.

It localises to the cytoplasm. The catalysed reaction is uridine(2552) in 23S rRNA + S-adenosyl-L-methionine = 2'-O-methyluridine(2552) in 23S rRNA + S-adenosyl-L-homocysteine + H(+). In terms of biological role, specifically methylates the uridine in position 2552 of 23S rRNA at the 2'-O position of the ribose in the fully assembled 50S ribosomal subunit. This chain is Ribosomal RNA large subunit methyltransferase E, found in Afipia carboxidovorans (strain ATCC 49405 / DSM 1227 / KCTC 32145 / OM5) (Oligotropha carboxidovorans).